The primary structure comprises 104 residues: Small ribosomal subunit protein bS6 (104 aa).

It belongs to the bacterial ribosomal protein bS6 family.

Binds together with bS18 to 16S ribosomal RNA. This chain is Small ribosomal subunit protein bS6, found in Elusimicrobium minutum (strain Pei191).